The following is a 120-amino-acid chain: Large ribosomal subunit protein bL12 (120 aa).

This sequence belongs to the bacterial ribosomal protein bL12 family. In terms of assembly, homodimer. Part of the ribosomal stalk of the 50S ribosomal subunit. Forms a multimeric L10(L12)X complex, where L10 forms an elongated spine to which 2 to 4 L12 dimers bind in a sequential fashion. Binds GTP-bound translation factors.

Functionally, forms part of the ribosomal stalk which helps the ribosome interact with GTP-bound translation factors. Is thus essential for accurate translation. The protein is Large ribosomal subunit protein bL12 of Listeria innocua serovar 6a (strain ATCC BAA-680 / CLIP 11262).